Consider the following 833-residue polypeptide: MNMEIGHPHEGKDDLGDKRVIMGTKFPMELGIRVGLGKEDSRCGESPVVSNKCEGRMAPPETKFPLSKGLEMGLERQNISRTVMQRGSLGVDSVSASQGTKPSLLPGRMGLENESLLAGYTHERIIQPPLGRVCGSSQAAGSRRAPLASGPEGVEELVGKPAFVMEPRQEMEKESTCVLMKPNTEIKLPVEVDIGLTQAEGPDETKNTEPQMGLVIEPPQCQFAQQHEQRKEAGNIESGVEPPDRIRPIYSGKFFDRTPCWPSAGKVIPVGYRVATCLTEKLPRLITPPEAKKYFNFRYPPAGVERVFYGRANDPQIAPYLTHGIRSKISVLANTLINPQPITTFQQKIKDKKESIYLSNRRAPLGKSHDQAPGLPKGMDTTNTTFGTAVIKEYSAKDVVNPPKSYEEVFKEGNEGHDLYVVSHNDYYAGEAKNRKYNPSSFHRCSVYGVPTPHFNDGRAMAKSLYWLHELQMKRGAKFVSKRADDFKEKFQHKLGRVLDPIAETMNVPPDCTFGACLRPEEYGVGDLIHNRLPDEYLRGKDRQRALIAAVRHHLKKVNYQKFDTLLAAFRHYDKKGDGMIDKDELQEACDQANLSLDDKLLDQLFDYCDVDNDGFINYLEFANFLNWKDKMLLKEYEERVIIKGRKPDCVNPTEANVEEPEQTLLIKPEDIVLKEAGSTEKTLRTLLRPSDKVSNYYKTTSSEINAIVGAIPSTCYPICGVPTIRSDIPAPRIRRISDRTNYGEEGSAYSLLYPTIFARKGVFERDFFKTRSKEEIAEILCNIGVKLSDEEFENVWNLASKKHHRGEVCVENIRNVLDELRHADRIKCKTLM.

2 EF-hand domains span residues 561–596 (QKFD…ANLS) and 597–632 (LDDK…KDKM). Asp574, Asp578, Met580, Glu585, Asp610, Asp612, Asp614, and Glu621 together coordinate Ca(2+).

In terms of assembly, microtubule inner protein component of sperm flagellar doublet microtubules. Interacts with STIM1 and ORAI1; the interactions take place upon Ca(2+)-store depletion and dissociate through a Ca(2+)-dependent mechanism. Interaction with STIM1 inhibits STIM1 interaction with SARAF. Expressed in airway epithelial cells.

It is found in the cytoplasm. Its subcellular location is the cytoskeleton. The protein localises to the cilium axoneme. The protein resides in the flagellum axoneme. Its function is as follows. Microtubule inner protein (MIP) part of the dynein-decorated doublet microtubules (DMTs) in cilia axoneme, which is required for motile cilia beating. Cytosolic sensor for calcium, modulates the interaction of STIM1 and ORAI1 upon store depletion and the activation of store-operated Ca(2+) entry (SOCE) and NFAT translocation from cytosol to nucleus. This chain is EF-hand domain-containing family member B, found in Homo sapiens (Human).